Reading from the N-terminus, the 185-residue chain is Elongation factor P (185 aa).

Belongs to the elongation factor P family.

It localises to the cytoplasm. It participates in protein biosynthesis; polypeptide chain elongation. In terms of biological role, involved in peptide bond synthesis. Stimulates efficient translation and peptide-bond synthesis on native or reconstituted 70S ribosomes in vitro. Probably functions indirectly by altering the affinity of the ribosome for aminoacyl-tRNA, thus increasing their reactivity as acceptors for peptidyl transferase. This Anoxybacillus flavithermus (strain DSM 21510 / WK1) protein is Elongation factor P.